A 92-amino-acid chain; its full sequence is MARSIWKGPFVDGYLIKKVQKLMESGKSEMIKTWSRRSTILPIFVGFTFSVHNGNKFIPVSVNEEMVGRKLGEFAPTRTFHGHGADKKIKRK.

The protein belongs to the universal ribosomal protein uS19 family.

In terms of biological role, protein S19 forms a complex with S13 that binds strongly to the 16S ribosomal RNA. This chain is Small ribosomal subunit protein uS19, found in Rickettsia africae (strain ESF-5).